The following is a 338-amino-acid chain: Biotin synthase (338 aa).

Residues 45–272 enclose the Radical SAM core domain; sequence DEVQMSTLLS…QSVVRLSAGR (228 aa). [4Fe-4S] cluster contacts are provided by C60, C64, and C67. [2Fe-2S] cluster is bound by residues C104, C135, C195, and R267.

Belongs to the radical SAM superfamily. Biotin synthase family. As to quaternary structure, homodimer. The cofactor is [4Fe-4S] cluster. It depends on [2Fe-2S] cluster as a cofactor.

It carries out the reaction (4R,5S)-dethiobiotin + (sulfur carrier)-SH + 2 reduced [2Fe-2S]-[ferredoxin] + 2 S-adenosyl-L-methionine = (sulfur carrier)-H + biotin + 2 5'-deoxyadenosine + 2 L-methionine + 2 oxidized [2Fe-2S]-[ferredoxin]. It participates in cofactor biosynthesis; biotin biosynthesis; biotin from 7,8-diaminononanoate: step 2/2. In terms of biological role, catalyzes the conversion of dethiobiotin (DTB) to biotin by the insertion of a sulfur atom into dethiobiotin via a radical-based mechanism. The sequence is that of Biotin synthase from Parvibaculum lavamentivorans (strain DS-1 / DSM 13023 / NCIMB 13966).